A 394-amino-acid polypeptide reads, in one-letter code: Phosphopentomutase (394 aa).

Mn(2+) contacts are provided by Asp10, Asp282, His287, Asp323, His324, and His335.

The protein belongs to the phosphopentomutase family. Mn(2+) serves as cofactor.

It is found in the cytoplasm. The catalysed reaction is 2-deoxy-alpha-D-ribose 1-phosphate = 2-deoxy-D-ribose 5-phosphate. It catalyses the reaction alpha-D-ribose 1-phosphate = D-ribose 5-phosphate. It functions in the pathway carbohydrate degradation; 2-deoxy-D-ribose 1-phosphate degradation; D-glyceraldehyde 3-phosphate and acetaldehyde from 2-deoxy-alpha-D-ribose 1-phosphate: step 1/2. Functionally, isomerase that catalyzes the conversion of deoxy-ribose 1-phosphate (dRib-1-P) and ribose 1-phosphate (Rib-1-P) to deoxy-ribose 5-phosphate (dRib-5-P) and ribose 5-phosphate (Rib-5-P), respectively. The protein is Phosphopentomutase of Dictyoglomus turgidum (strain DSM 6724 / Z-1310).